The sequence spans 248 residues: MERGTSKFSWIGLVARIYNYIPHPSIFSNAILGIAWLFLIFLCCSCLTKSSIFARLLRVKNETTTVDVGFFGVCDQAINSTSRVCHELRNWDQTTGGLAYETSRFAWLQVHPVLLAIVVVFSTLSIVLTILKYLAPAYIRQWSISCLTTSTAACLLLALQMALAHISANSYAVGMNLTGKATAKFGVAAAVFGWISSGFFLLFSLIHLGLWTIERNKQKLFEETSLSFSFITTKLRLIETQYFICKDY.

Transmembrane regions (helical) follow at residues 26-46 (IFSN…CCSC), 110-130 (VHPV…VLTI), 144-164 (ISCL…MALA), and 186-206 (GVAA…FSLI).

The protein belongs to the SUR7 family.

It localises to the membrane. This is Delayed minus-nitrogen induction protein 2 (dni2) from Schizosaccharomyces pombe (strain 972 / ATCC 24843) (Fission yeast).